The chain runs to 256 residues: Thiazole synthase (256 aa).

Lys98 acts as the Schiff-base intermediate with DXP in catalysis. Residues Gly159, 185–186 (AG), and 207–208 (NT) contribute to the 1-deoxy-D-xylulose 5-phosphate site.

The protein belongs to the ThiG family. In terms of assembly, homotetramer. Forms heterodimers with either ThiH or ThiS.

Its subcellular location is the cytoplasm. It catalyses the reaction [ThiS sulfur-carrier protein]-C-terminal-Gly-aminoethanethioate + 2-iminoacetate + 1-deoxy-D-xylulose 5-phosphate = [ThiS sulfur-carrier protein]-C-terminal Gly-Gly + 2-[(2R,5Z)-2-carboxy-4-methylthiazol-5(2H)-ylidene]ethyl phosphate + 2 H2O + H(+). It functions in the pathway cofactor biosynthesis; thiamine diphosphate biosynthesis. Its function is as follows. Catalyzes the rearrangement of 1-deoxy-D-xylulose 5-phosphate (DXP) to produce the thiazole phosphate moiety of thiamine. Sulfur is provided by the thiocarboxylate moiety of the carrier protein ThiS. In vitro, sulfur can be provided by H(2)S. This is Thiazole synthase from Aliivibrio fischeri (strain MJ11) (Vibrio fischeri).